A 604-amino-acid polypeptide reads, in one-letter code: Aspartate--tRNA(Asp/Asn) ligase (604 aa).

E187 lines the L-aspartate pocket. The interval 211–214 (QQFK) is aspartate. R233 and H461 together coordinate L-aspartate. An ATP-binding site is contributed by 233–235 (RDE). E495 provides a ligand contact to ATP. Residue R502 coordinates L-aspartate. 547 to 550 (GLDR) is an ATP binding site.

The protein belongs to the class-II aminoacyl-tRNA synthetase family. Type 1 subfamily. Homodimer.

The protein localises to the cytoplasm. The catalysed reaction is tRNA(Asx) + L-aspartate + ATP = L-aspartyl-tRNA(Asx) + AMP + diphosphate. In terms of biological role, aspartyl-tRNA synthetase with relaxed tRNA specificity since it is able to aspartylate not only its cognate tRNA(Asp) but also tRNA(Asn). Reaction proceeds in two steps: L-aspartate is first activated by ATP to form Asp-AMP and then transferred to the acceptor end of tRNA(Asp/Asn). This is Aspartate--tRNA(Asp/Asn) ligase from Chlorobium luteolum (strain DSM 273 / BCRC 81028 / 2530) (Pelodictyon luteolum).